The chain runs to 510 residues: NAD(P)H-quinone oxidoreductase subunit 2 A, chloroplastic (510 aa).

Helical transmembrane passes span 31–51, 59–79, 99–119, 124–144, 149–169, 183–203, 229–249, 295–315, 323–343, 354–374, 395–415, and 418–438; these read FIFP…IDLT, WFYF…LFRW, IFQF…VEYI, MAIT…MFLC, LITI…LSGY, YLLM…WLYG, ISIA…PAPF, WHLL…LLAI, MLAY…IVGD, YMLF…LFGL, ALSL…AGFF, and LYLF…IGLL.

Belongs to the complex I subunit 2 family. As to quaternary structure, NDH is composed of at least 16 different subunits, 5 of which are encoded in the nucleus.

The protein localises to the plastid. It localises to the chloroplast thylakoid membrane. The catalysed reaction is a plastoquinone + NADH + (n+1) H(+)(in) = a plastoquinol + NAD(+) + n H(+)(out). The enzyme catalyses a plastoquinone + NADPH + (n+1) H(+)(in) = a plastoquinol + NADP(+) + n H(+)(out). In terms of biological role, NDH shuttles electrons from NAD(P)H:plastoquinone, via FMN and iron-sulfur (Fe-S) centers, to quinones in the photosynthetic chain and possibly in a chloroplast respiratory chain. The immediate electron acceptor for the enzyme in this species is believed to be plastoquinone. Couples the redox reaction to proton translocation, and thus conserves the redox energy in a proton gradient. This is NAD(P)H-quinone oxidoreductase subunit 2 A, chloroplastic from Oryza nivara (Indian wild rice).